The sequence spans 198 residues: Integrator complex subunit 8-like protein (198 aa).

Belongs to the Integrator subunit 8 family. Component of the Integrator complex. The core complex associates with protein phosphatase 2A subunits, to form the Integrator-PP2A (INTAC) complex.

The protein resides in the nucleus. The protein localises to the chromosome. Its function is as follows. Component of the integrator complex, a multiprotein complex that terminates RNA polymerase II (Pol II) transcription in the promoter-proximal region of genes. The integrator complex provides a quality checkpoint during transcription elongation by driving premature transcription termination of transcripts that are unfavorably configured for transcriptional elongation: the complex terminates transcription by (1) catalyzing dephosphorylation of the C-terminal domain (CTD) of Pol II subunit polr2a, (2) degrading the exiting nascent RNA transcript via endonuclease activity and (3) promoting the release of Pol II from bound DNA. The integrator complex is also involved in terminating the synthesis of non-coding Pol II transcripts, such as enhancer RNAs (eRNAs), small nuclear RNAs (snRNAs), telomerase RNAs and long non-coding RNAs (lncRNAs). Within the integrator complex, INTS8 is required for the recruitment of protein phosphatase 2A (PP2A) to transcription pause-release checkpoint. The sequence is that of Integrator complex subunit 8-like protein from Dictyostelium discoideum (Social amoeba).